The primary structure comprises 202 residues: FMN-dependent NADH:quinone oxidoreductase (202 aa).

Residues Ser-9, 15-17, and 94-97 contribute to the FMN site; these read SAS and MYNL.

Belongs to the azoreductase type 1 family. In terms of assembly, homodimer. FMN is required as a cofactor.

It catalyses the reaction 2 a quinone + NADH + H(+) = 2 a 1,4-benzosemiquinone + NAD(+). The enzyme catalyses N,N-dimethyl-1,4-phenylenediamine + anthranilate + 2 NAD(+) = 2-(4-dimethylaminophenyl)diazenylbenzoate + 2 NADH + 2 H(+). Quinone reductase that provides resistance to thiol-specific stress caused by electrophilic quinones. In terms of biological role, also exhibits azoreductase activity. Catalyzes the reductive cleavage of the azo bond in aromatic azo compounds to the corresponding amines. The polypeptide is FMN-dependent NADH:quinone oxidoreductase (Gluconobacter oxydans (strain 621H) (Gluconobacter suboxydans)).